The sequence spans 192 residues: MTQSSPQNLILVGRVAGAFGVRGELRIATYTEDPLTLTRFKALTRQDGSPALTVQTARVVKDGVVARCAGVDTKEAADALRGLRLYVPRAALPEPDEDEYYLADLIGLPVRHVATDELLGKIKSVQNFGADDLLEIDPALGGQTWYLPFTRAAVPEVKIADGVVLADPPALVGEPEGPESPAEDDDGERHYD.

The region spanning 97-172 is the PRC barrel domain; the sequence is EDEYYLADLI…VVLADPPALV (76 aa). Residues 168 to 192 are disordered; that stretch reads PPALVGEPEGPESPAEDDDGERHYD.

It belongs to the RimM family. As to quaternary structure, binds ribosomal protein uS19.

Its subcellular location is the cytoplasm. Its function is as follows. An accessory protein needed during the final step in the assembly of 30S ribosomal subunit, possibly for assembly of the head region. Essential for efficient processing of 16S rRNA. May be needed both before and after RbfA during the maturation of 16S rRNA. It has affinity for free ribosomal 30S subunits but not for 70S ribosomes. The chain is Ribosome maturation factor RimM from Caulobacter sp. (strain K31).